A 175-amino-acid chain; its full sequence is RNA pyrophosphohydrolase (175 aa).

The Nudix hydrolase domain occupies G6–K149. A Nudix box motif is present at residues G38–G59.

Belongs to the Nudix hydrolase family. RppH subfamily. It depends on a divalent metal cation as a cofactor.

Functionally, accelerates the degradation of transcripts by removing pyrophosphate from the 5'-end of triphosphorylated RNA, leading to a more labile monophosphorylated state that can stimulate subsequent ribonuclease cleavage. The chain is RNA pyrophosphohydrolase from Sodalis glossinidius (strain morsitans).